A 76-amino-acid chain; its full sequence is Exodeoxyribonuclease 7 small subunit (76 aa).

It belongs to the XseB family. In terms of assembly, heterooligomer composed of large and small subunits.

Its subcellular location is the cytoplasm. It catalyses the reaction Exonucleolytic cleavage in either 5'- to 3'- or 3'- to 5'-direction to yield nucleoside 5'-phosphates.. Its function is as follows. Bidirectionally degrades single-stranded DNA into large acid-insoluble oligonucleotides, which are then degraded further into small acid-soluble oligonucleotides. The protein is Exodeoxyribonuclease 7 small subunit of Geotalea uraniireducens (strain Rf4) (Geobacter uraniireducens).